Here is a 620-residue protein sequence, read N- to C-terminus: Dopamine beta-hydroxylase (620 aa).

Topologically, residues 1 to 19 are cytoplasmic; sequence MQPHLSHQPCWSLPSPSVR. A helical; Signal-anchor for type II membrane protein transmembrane segment spans residues 20–40; sequence EAASMYGTAVAIFLVILVAAL. At 41–620 the chain is on the intragranular side; that stretch reads QGSEPPESPF…FVVITHGGRH (580 aa). The DOMON domain occupies 60–176; the sequence is GTLELSWNVS…DTVHLVYGIL (117 aa). N-linked (GlcNAc...) asparagine glycans are attached at residues N67 and N187. Disulfide bonds link C157/C599, C235/C286, C272/C298, C393/C506, C397/C568, and C469/C491. The active site involves Y233. H265 and H266 together coordinate Cu(2+). N-linked (GlcNAc...) asparagine glycosylation is present at N274. H336 is a binding site for Cu(2+). S349 carries the post-translational modification Phosphoserine; by CaMK. Residue H415 is part of the active site. Cu(2+) is bound by residues H415 and H417. Residue N475 is glycosylated (N-linked (GlcNAc...) asparagine). M490 provides a ligand contact to Cu(2+). N-linked (GlcNAc...) asparagine glycosylation is found at N569 and N587.

This sequence belongs to the copper type II ascorbate-dependent monooxygenase family. As to quaternary structure, homotetramer; composed of two disulfide-linked dimers. It depends on Cu(2+) as a cofactor. Proteolytic cleavage after the membrane-anchor leads to the release of the soluble form. Post-translationally, N-glycosylated. As to expression, chromaffin granules of the adrenal medulla and synaptic vesicles of the sympathetic nervous system.

The protein resides in the cytoplasmic vesicle. The protein localises to the secretory vesicle lumen. Its subcellular location is the secretory vesicle. It localises to the chromaffin granule lumen. It is found in the secreted. The protein resides in the secretory vesicle membrane. The protein localises to the chromaffin granule membrane. The catalysed reaction is dopamine + 2 L-ascorbate + O2 = (R)-noradrenaline + 2 monodehydro-L-ascorbate radical + H2O. It participates in catecholamine biosynthesis; (R)-noradrenaline biosynthesis; (R)-noradrenaline from dopamine: step 1/1. In terms of biological role, catalyzes the hydroxylation of dopamine to noradrenaline (also known as norepinephrine), and is thus vital for regulation of these neurotransmitters. This chain is Dopamine beta-hydroxylase (Dbh), found in Rattus norvegicus (Rat).